The following is a 118-amino-acid chain: Large ribosomal subunit protein uL18 (118 aa).

The protein belongs to the universal ribosomal protein uL18 family. As to quaternary structure, part of the 50S ribosomal subunit; part of the 5S rRNA/L5/L18/L25 subcomplex. Contacts the 5S and 23S rRNAs.

Its function is as follows. This is one of the proteins that bind and probably mediate the attachment of the 5S RNA into the large ribosomal subunit, where it forms part of the central protuberance. The sequence is that of Large ribosomal subunit protein uL18 from Cupriavidus pinatubonensis (strain JMP 134 / LMG 1197) (Cupriavidus necator (strain JMP 134)).